Consider the following 82-residue polypeptide: Putative antitoxin VapB23 (82 aa).

Putative antitoxin component of a possible type II toxin-antitoxin (TA) system. The cognate toxin is VapC23. This is Putative antitoxin VapB23 (vapB23) from Mycobacterium tuberculosis (strain ATCC 25618 / H37Rv).